Here is a 154-residue protein sequence, read N- to C-terminus: Urease accessory protein UreE (154 aa).

It belongs to the UreE family.

It is found in the cytoplasm. Involved in urease metallocenter assembly. Binds nickel. Probably functions as a nickel donor during metallocenter assembly. This is Urease accessory protein UreE from Escherichia coli O157:H7.